We begin with the raw amino-acid sequence, 83 residues long: Large ribosomal subunit protein bL27 (83 aa).

The tract at residues 1-22 (MAHKKGQGSTRNGRDSHSKRLG) is disordered.

It belongs to the bacterial ribosomal protein bL27 family.

The sequence is that of Large ribosomal subunit protein bL27 from Protochlamydia amoebophila (strain UWE25).